Consider the following 795-residue polypeptide: Lon protease (795 aa).

Positions 17–214 (YPLMPLRDIV…KVYKFLQDEI (198 aa)) constitute a Lon N-terminal domain. 370–377 (GPPGVGKT) is an ATP binding site. The Lon proteolytic domain maps to 605-787 (KPLVGVATGL…EEVFKIALVR (183 aa)). Active-site residues include serine 692 and lysine 735.

It belongs to the peptidase S16 family. In terms of assembly, homohexamer. Organized in a ring with a central cavity.

It localises to the cytoplasm. It carries out the reaction Hydrolysis of proteins in presence of ATP.. In terms of biological role, ATP-dependent serine protease that mediates the selective degradation of mutant and abnormal proteins as well as certain short-lived regulatory proteins. Required for cellular homeostasis and for survival from DNA damage and developmental changes induced by stress. Degrades polypeptides processively to yield small peptide fragments that are 5 to 10 amino acids long. Binds to DNA in a double-stranded, site-specific manner. The chain is Lon protease from Aquifex aeolicus (strain VF5).